The primary structure comprises 103 residues: UPF0145 protein BLi01945/BL05168 (103 aa).

This sequence belongs to the UPF0145 family.

The protein is UPF0145 protein BLi01945/BL05168 of Bacillus licheniformis (strain ATCC 14580 / DSM 13 / JCM 2505 / CCUG 7422 / NBRC 12200 / NCIMB 9375 / NCTC 10341 / NRRL NRS-1264 / Gibson 46).